The following is a 1153-amino-acid chain: ATP-dependent helicase/deoxyribonuclease subunit B (1153 aa).

An ATP-binding site is contributed by G8 to S15. [4Fe-4S] cluster is bound by residues C786, C1104, C1107, and C1113.

Belongs to the helicase family. AddB/RexB type 1 subfamily. As to quaternary structure, heterodimer of AddA and AddB. Requires Mg(2+) as cofactor. The cofactor is [4Fe-4S] cluster.

The heterodimer acts as both an ATP-dependent DNA helicase and an ATP-dependent, dual-direction single-stranded exonuclease. Recognizes the chi site generating a DNA molecule suitable for the initiation of homologous recombination. The AddB subunit has 5' -&gt; 3' nuclease activity but not helicase activity. The chain is ATP-dependent helicase/deoxyribonuclease subunit B from Clostridium acetobutylicum (strain ATCC 824 / DSM 792 / JCM 1419 / IAM 19013 / LMG 5710 / NBRC 13948 / NRRL B-527 / VKM B-1787 / 2291 / W).